The chain runs to 591 residues: V-type ATP synthase alpha chain (591 aa).

233–240 (GPFGAGKT) contributes to the ATP binding site.

This sequence belongs to the ATPase alpha/beta chains family.

The enzyme catalyses ATP + H2O + 4 H(+)(in) = ADP + phosphate + 5 H(+)(out). Produces ATP from ADP in the presence of a proton gradient across the membrane. The V-type alpha chain is a catalytic subunit. The sequence is that of V-type ATP synthase alpha chain from Streptococcus pneumoniae (strain ATCC 700669 / Spain 23F-1).